A 173-amino-acid polypeptide reads, in one-letter code: Ferritin, lower subunit (173 aa).

The 150-residue stretch at 7 to 156 folds into the Ferritin-like diiron domain; that stretch reads QNFHQDCEAG…DHITSLKKLW (150 aa). The Fe cation site is built by Glu-59 and His-62.

The protein belongs to the ferritin family. As to quaternary structure, oligomer of 24 subunits. The functional molecule is roughly spherical and contains a central cavity into which the polymeric mineral iron core is deposited.

In terms of biological role, stores iron in a soluble, non-toxic, readily available form. Important for iron homeostasis. Iron is taken up in the ferrous form and deposited as ferric hydroxides after oxidation. In Aquarana catesbeiana (American bullfrog), this protein is Ferritin, lower subunit.